Here is a 158-residue protein sequence, read N- to C-terminus: Endoribonuclease YbeY (158 aa).

Zn(2+) is bound by residues His118, His122, and His128.

This sequence belongs to the endoribonuclease YbeY family. It depends on Zn(2+) as a cofactor.

The protein localises to the cytoplasm. Single strand-specific metallo-endoribonuclease involved in late-stage 70S ribosome quality control and in maturation of the 3' terminus of the 16S rRNA. The polypeptide is Endoribonuclease YbeY (Bartonella henselae (strain ATCC 49882 / DSM 28221 / CCUG 30454 / Houston 1) (Rochalimaea henselae)).